The following is a 218-amino-acid chain: Imidazole glycerol phosphate synthase subunit HisH (218 aa).

The Glutamine amidotransferase type-1 domain occupies 1–213 (MTTIIDYGIG…AALPTTEEAG (213 aa)). Catalysis depends on cysteine 79, which acts as the Nucleophile. Residues histidine 188 and glutamate 190 contribute to the active site.

As to quaternary structure, heterodimer of HisH and HisF.

It is found in the cytoplasm. The catalysed reaction is 5-[(5-phospho-1-deoxy-D-ribulos-1-ylimino)methylamino]-1-(5-phospho-beta-D-ribosyl)imidazole-4-carboxamide + L-glutamine = D-erythro-1-(imidazol-4-yl)glycerol 3-phosphate + 5-amino-1-(5-phospho-beta-D-ribosyl)imidazole-4-carboxamide + L-glutamate + H(+). It catalyses the reaction L-glutamine + H2O = L-glutamate + NH4(+). The protein operates within amino-acid biosynthesis; L-histidine biosynthesis; L-histidine from 5-phospho-alpha-D-ribose 1-diphosphate: step 5/9. Its function is as follows. IGPS catalyzes the conversion of PRFAR and glutamine to IGP, AICAR and glutamate. The HisH subunit catalyzes the hydrolysis of glutamine to glutamate and ammonia as part of the synthesis of IGP and AICAR. The resulting ammonia molecule is channeled to the active site of HisF. The polypeptide is Imidazole glycerol phosphate synthase subunit HisH (Salinibacter ruber (strain DSM 13855 / M31)).